The chain runs to 167 residues: Aphrodisin (167 aa).

The first 16 residues, Met-1–Ala-16, serve as a signal peptide directing secretion. At Gln-17 the chain carries Pyrrolidone carboxylic acid. Cystine bridges form between Cys-54-Cys-58 and Cys-73-Cys-165. 2 N-linked (GlcNAc...) asparagine glycosylation sites follow: Asn-57 and Asn-85.

This sequence belongs to the calycin superfamily. Lipocalin family. As to expression, expressed in the vagina, uterus, and Bartholin's glands of female hamsters. Secreted in vaginal discharge.

The protein localises to the secreted. In terms of biological role, acts as an aphrodisiac pheromone, reliably eliciting copulatory behavior from male hamster. In Mesocricetus auratus (Golden hamster), this protein is Aphrodisin.